The sequence spans 125 residues: Large ribosomal subunit protein bL12 (125 aa).

Belongs to the bacterial ribosomal protein bL12 family. In terms of assembly, homodimer. Part of the ribosomal stalk of the 50S ribosomal subunit. Forms a multimeric L10(L12)X complex, where L10 forms an elongated spine to which 2 to 4 L12 dimers bind in a sequential fashion. Binds GTP-bound translation factors.

Functionally, forms part of the ribosomal stalk which helps the ribosome interact with GTP-bound translation factors. Is thus essential for accurate translation. In Campylobacter jejuni (strain RM1221), this protein is Large ribosomal subunit protein bL12.